Consider the following 315-residue polypeptide: tRNA-dihydrouridine(16) synthase (315 aa).

Residues 7 to 9 (PME) and glutamine 68 each bind FMN. Cysteine 98 serves as the catalytic Proton donor. Residues lysine 139, 200-202 (NGE), and 224-225 (GR) contribute to the FMN site.

The protein belongs to the Dus family. DusC subfamily. FMN is required as a cofactor.

The enzyme catalyses 5,6-dihydrouridine(16) in tRNA + NADP(+) = uridine(16) in tRNA + NADPH + H(+). It catalyses the reaction 5,6-dihydrouridine(16) in tRNA + NAD(+) = uridine(16) in tRNA + NADH + H(+). Catalyzes the synthesis of 5,6-dihydrouridine (D), a modified base found in the D-loop of most tRNAs, via the reduction of the C5-C6 double bond in target uridines. DusC specifically modifies U16 in tRNAs. The chain is tRNA-dihydrouridine(16) synthase from Escherichia coli (strain K12).